Reading from the N-terminus, the 527-residue chain is Importin subunit alpha (527 aa).

One can recognise an IBB domain in the interval 1–58 (MSLRPNSRTEARRSRYKVAVDAEEGRRRREDNMVEIRKNKREENLLKKRREGLLQAQQ). ARM repeat units follow at residues 109–151 (IEEV…TSEN), 152–196 (TKVV…YRDL), 197–234 (VLGH…RGKP), 235–279 (QPLF…DKIQ), 280–319 (AVIE…DDIQ), 320–362 (TQVM…NRNQ), 363–403 (IQIV…GGNH), and 404–445 (DQIK…KIGE).

It belongs to the importin alpha family. In terms of assembly, forms a complex with importin subunit beta-1.

The protein localises to the cytoplasm. In terms of biological role, binds specifically and directly to substrates containing either a simple or bipartite NLS motif. Promotes docking of import substrates to the nuclear envelope. Seems to act as a cytosolic receptor for both simple and bipartite NLS motifs. This Solanum lycopersicum (Tomato) protein is Importin subunit alpha.